A 260-amino-acid chain; its full sequence is Triosephosphate isomerase (260 aa).

10–12 (NWK) contacts substrate. H100 functions as the Electrophile in the catalytic mechanism. E172 functions as the Proton acceptor in the catalytic mechanism. Substrate-binding positions include G178, S218, and 239 to 240 (GG).

This sequence belongs to the triosephosphate isomerase family. Homodimer.

The protein resides in the cytoplasm. It catalyses the reaction D-glyceraldehyde 3-phosphate = dihydroxyacetone phosphate. Its pathway is carbohydrate biosynthesis; gluconeogenesis. It functions in the pathway carbohydrate degradation; glycolysis; D-glyceraldehyde 3-phosphate from glycerone phosphate: step 1/1. Involved in the gluconeogenesis. Catalyzes stereospecifically the conversion of dihydroxyacetone phosphate (DHAP) to D-glyceraldehyde-3-phosphate (G3P). This Corynebacterium diphtheriae (strain ATCC 700971 / NCTC 13129 / Biotype gravis) protein is Triosephosphate isomerase.